The primary structure comprises 293 residues: Elongation factor Ts (293 aa).

The tract at residues 80-83 (TDFV) is involved in Mg(2+) ion dislocation from EF-Tu.

This sequence belongs to the EF-Ts family.

Its subcellular location is the cytoplasm. Functionally, associates with the EF-Tu.GDP complex and induces the exchange of GDP to GTP. It remains bound to the aminoacyl-tRNA.EF-Tu.GTP complex up to the GTP hydrolysis stage on the ribosome. The polypeptide is Elongation factor Ts (Aeromonas salmonicida (strain A449)).